Consider the following 273-residue polypeptide: MAIHLYKTSTSSTRNGAVDSQVKSNPRNNLIYGQHRCGKGRNARGIITAGHRGGGHKRLYRKIDFRRNEKEISGRIVTIEYDPNRNAYICLIHYGDGEKRYILHPRGAIIGDTIVSGTEVPISMGNALPLTDMPLGTAIHNIEITLGKGGQLARAAGAVAKLIAKEGKSATLRLPSGEVRLISKNCLATVGQVGNVGVNQKSLGRAGSKCWLGKRPVVRGVVMNPVDHPHGGGEGRAPIGRKKPTTPWGYPALGRRSRKRNKYSDSLILRRRK.

2 disordered regions span residues 1–25 and 224–273; these read MAIHLYKTSTSSTRNGAVDSQVKSN and NPVD…RRRK.

The protein belongs to the universal ribosomal protein uL2 family. Part of the 50S ribosomal subunit.

The protein resides in the plastid. It is found in the chloroplast. In Phalaenopsis aphrodite subsp. formosana (Moth orchid), this protein is Large ribosomal subunit protein uL2cz/uL2cy (rpl2-A).